The following is a 352-amino-acid chain: Gamma-aminobutyric acid-binding protein (352 aa).

A signal peptide spans 1-28; the sequence is MFKSLHQYAHVFSRLSLFGLAFAAAAQA.

It belongs to the bacterial solute-binding protein 1 family.

The protein resides in the periplasm. Binds specifically gamma-aminobutyric acid (GABA) with nanomolar affinity. Does not bind structurally related compounds such as 4-aminovaleric acid, spermidine, histamine and butyric acid. This Pseudomonas aeruginosa (strain ATCC 15692 / DSM 22644 / CIP 104116 / JCM 14847 / LMG 12228 / 1C / PRS 101 / PAO1) protein is Gamma-aminobutyric acid-binding protein.